The following is a 347-amino-acid chain: Fused nickel transport protein NikMN (347 aa).

A run of 9 helical transmembrane segments spans residues 6-26 (GYLS…FWYV), 40-60 (LPLV…NLPI), 73-93 (IAAV…ALLI), 96-116 (IFFG…MAVV), 140-160 (VIMA…LAAV), 185-205 (VAVP…EFIV), 236-256 (LWAG…AAGT), 273-293 (AAMA…GGFA), and 319-339 (VLSA…SAGL).

This sequence belongs to the CbiM family. NikM subfamily. As to quaternary structure, forms an energy-coupling factor (ECF) transporter complex composed of an ATP-binding protein (A component, NikO), a transmembrane protein (T component, NikQ) and a fused possible substrate-capture protein (S component, NikMN) of unknown stoichimetry.

It localises to the cell inner membrane. In terms of biological role, part of the energy-coupling factor (ECF) transporter complex NikMNQO involved in nickel import. The complex confers nickel uptake upon expression in E.coli; can also transport cobalt with a very low affinity. This is Fused nickel transport protein NikMN (nikMN) from Rhodobacter capsulatus (strain ATCC BAA-309 / NBRC 16581 / SB1003).